A 341-amino-acid chain; its full sequence is RNA 3'-terminal phosphate cyclase (341 aa).

Residues glutamine 102 and 283–287 contribute to the ATP site; that span reads HLADQ. The active-site Tele-AMP-histidine intermediate is the histidine 308.

The protein belongs to the RNA 3'-terminal cyclase family. Type 1 subfamily.

The protein resides in the cytoplasm. The catalysed reaction is a 3'-end 3'-phospho-ribonucleotide-RNA + ATP = a 3'-end 2',3'-cyclophospho-ribonucleotide-RNA + AMP + diphosphate. Functionally, catalyzes the conversion of 3'-phosphate to a 2',3'-cyclic phosphodiester at the end of RNA. The mechanism of action of the enzyme occurs in 3 steps: (A) adenylation of the enzyme by ATP; (B) transfer of adenylate to an RNA-N3'P to produce RNA-N3'PP5'A; (C) and attack of the adjacent 2'-hydroxyl on the 3'-phosphorus in the diester linkage to produce the cyclic end product. The biological role of this enzyme is unknown but it is likely to function in some aspects of cellular RNA processing. The chain is RNA 3'-terminal phosphate cyclase from Ectopseudomonas mendocina (strain ymp) (Pseudomonas mendocina).